Reading from the N-terminus, the 69-residue chain is ATP synthase protein 8 (69 aa).

A helical membrane pass occupies residues 8–24; it reads TWTLTISLMIISLFCIY. At K55 the chain carries N6-acetyllysine; alternate. Position 55 is an N6-succinyllysine; alternate (K55). Residue K58 is modified to N6-acetyllysine.

The protein belongs to the ATPase protein 8 family. F-type ATPases have 2 components, CF(1) - the catalytic core - and CF(0) - the membrane proton channel. Component of an ATP synthase complex composed of ATP5PB, ATP5MC1, ATP5F1E, ATP5PD, ATP5ME, ATP5PF, ATP5MF, MT-ATP6, MT-ATP8, ATP5F1A, ATP5F1B, ATP5F1D, ATP5F1C, ATP5PO, ATP5MG, ATP5MK and ATP5MJ. Interacts with PRICKLE3.

It localises to the mitochondrion membrane. Mitochondrial membrane ATP synthase (F(1)F(0) ATP synthase or Complex V) produces ATP from ADP in the presence of a proton gradient across the membrane which is generated by electron transport complexes of the respiratory chain. F-type ATPases consist of two structural domains, F(1) - containing the extramembraneous catalytic core and F(0) - containing the membrane proton channel, linked together by a central stalk and a peripheral stalk. During catalysis, ATP synthesis in the catalytic domain of F(1) is coupled via a rotary mechanism of the central stalk subunits to proton translocation. Part of the complex F(0) domain. Minor subunit located with subunit a in the membrane. This is ATP synthase protein 8 (MT-ATP8) from Didelphis virginiana (North American opossum).